We begin with the raw amino-acid sequence, 339 residues long: Starvation-sensing protein RspB (339 aa).

Residues Cys-37, His-59, Cys-89, Cys-92, Cys-95, Cys-103, and Glu-144 each coordinate Zn(2+).

It belongs to the zinc-containing alcohol dehydrogenase family. Zn(2+) is required as a cofactor.

In terms of biological role, not known; probable catabolic enzyme. This Escherichia coli (strain K12) protein is Starvation-sensing protein RspB.